The following is an 88-amino-acid chain: Small ribosomal subunit protein bS20 (88 aa).

Disordered regions lie at residues Met1–Ala23 and Gly65–Ala88.

The protein belongs to the bacterial ribosomal protein bS20 family.

Functionally, binds directly to 16S ribosomal RNA. This Rhizobium meliloti (strain 1021) (Ensifer meliloti) protein is Small ribosomal subunit protein bS20.